A 161-amino-acid chain; its full sequence is SsrA-binding protein (161 aa).

Belongs to the SmpB family.

It is found in the cytoplasm. In terms of biological role, required for rescue of stalled ribosomes mediated by trans-translation. Binds to transfer-messenger RNA (tmRNA), required for stable association of tmRNA with ribosomes. tmRNA and SmpB together mimic tRNA shape, replacing the anticodon stem-loop with SmpB. tmRNA is encoded by the ssrA gene; the 2 termini fold to resemble tRNA(Ala) and it encodes a 'tag peptide', a short internal open reading frame. During trans-translation Ala-aminoacylated tmRNA acts like a tRNA, entering the A-site of stalled ribosomes, displacing the stalled mRNA. The ribosome then switches to translate the ORF on the tmRNA; the nascent peptide is terminated with the 'tag peptide' encoded by the tmRNA and targeted for degradation. The ribosome is freed to recommence translation, which seems to be the essential function of trans-translation. The polypeptide is SsrA-binding protein (Mycolicibacterium smegmatis (strain ATCC 700084 / mc(2)155) (Mycobacterium smegmatis)).